The following is a 309-amino-acid chain: Oxygen-dependent coproporphyrinogen-III oxidase (309 aa).

Ser-94 is a substrate binding site. Positions 98 and 108 each coordinate a divalent metal cation. The active-site Proton donor is the His-108. Position 110–112 (110–112 (NVR)) interacts with substrate. The a divalent metal cation site is built by His-147 and His-177. The interval 242–277 (YVEFNLVWDRGTLFGLQTGGRTESILMSLPPLVRWE) is important for dimerization. Substrate is bound at residue 260 to 262 (GGR).

This sequence belongs to the aerobic coproporphyrinogen-III oxidase family. In terms of assembly, homodimer. A divalent metal cation is required as a cofactor.

The protein localises to the cytoplasm. The catalysed reaction is coproporphyrinogen III + O2 + 2 H(+) = protoporphyrinogen IX + 2 CO2 + 2 H2O. The protein operates within porphyrin-containing compound metabolism; protoporphyrin-IX biosynthesis; protoporphyrinogen-IX from coproporphyrinogen-III (O2 route): step 1/1. In terms of biological role, involved in the heme biosynthesis. Catalyzes the aerobic oxidative decarboxylation of propionate groups of rings A and B of coproporphyrinogen-III to yield the vinyl groups in protoporphyrinogen-IX. This is Oxygen-dependent coproporphyrinogen-III oxidase from Yersinia pseudotuberculosis serotype O:1b (strain IP 31758).